The chain runs to 1515 residues: EGEKHVGNVEVKAQYGKGKSVNLVVNGAAXPQEYDLDIKANAPQAENLKKLDLSLKTKNPSPDTYVVLVAIDADGRVYKSQSTVVYSEANPLIDVSYTAPNTPTSRLYVKGVKLSENQAKVEVKIVNIRDLSLDAVSEATLQKDNIILKVVANSEKLGLKNYKVDVATKDANNNGKRLEFQATNDNKNVLSGSTTFISKQENKKTIIEGSGTLKVKEEQKSANFKYIRTILTEGNEQGVETFLNLAVGESSYVAESRITNLEYKNSYVYCEEKKQCAHVELNSKVNIQKPGVVQHTVNVNFDLVKLGISPEFGLQITNEISEKKLPQYTLDLHAIKNDKKYHLNIYSHPELGKFPAGITVTLPHRVLALETRVEYPTNKGLPFPIKGEITIHPDKRKAQYKTAARFLVDVTGSDKQHALIADFGFSHPKLGKEALFKVRGNLKNSDNIIEIATSASVSCHPIFGADRESKFVLQVSPSSFKLLLDTPIVKVIELEGTAVVKENLQQGDLKFCLLQGKPVAVRALIKDYQYYEFTTDESDRKLSVIGHLDPEKRVDISADLVLSGEKKNIAHGALFLKDNLVKSEYGASKDNFDYFVTALKNDLTNLEARVKQLGEEINSDFKDILKRAQPKIQELEKAYKEDLEKIYQEVANDETLKNSQVINEVAQFLAKIIDDIVHAFKPLVDKVYNVIVETTKKIEEIYEKEIAPQIKSLYETVASIVKEFFDGLLDIVAHYAALITDFYEKHKPELEELTNTITEIFKDLTRIIVIQLKELKATVGQALEAIITTIKETQNSVVTALQAKYEELGVPESVLNAILEAHNAIRALLPTEETKNFADAVYTYVSKKLRSEKFDEQAQLRVVYEKFTVALQSLIQFLRGQFNQFGIPSLFNIESIPFITGPGQLSYTPTGVGASLSLVNQILRGDIPDPLSLIQAYRPRSLDPFDEIPAKLRGVVVNGQHIFTFDGRHLTFPGNCRYVLAHDYVDRNFTLVLQLQNGKPKSLILEDKSGTTVELKNNGQVAVNGASHGYPVEEKDVYAFRRPDGVLGIGSQYGALAYCSAKLEVCYFEINGFYLGKLRGLLGDGNNEAYDDFRLPNGKISTSESEFGNSYRLASSCPQAKCPEHSHHQQHAALPPACEQVFGGTSTLRPLSLVLDVAPFRQACIHAVAGNAENALREACSLGAGYVALGLGTLLPAVLPPACVRCTDAGGSKNIGDTYEVKLPNKQADILVVIETTKSNEKKDKDLVVPLVSQVVDTTRNLVVPWNLKSKHIAGIKVYLIGVTSRFPYPIVYDTDLKLKSAKVAFNDEHRYQYTPTIKTNCEKADSIQKTIANVIDEIRIVLGLSNINAGYLSAFETPLRPGALKHVITVNGDACKLEIGTPLQAISNIITYNQLGITHSLVASIPGLEVDGKSAPNVIGYTNDYALEFDGKKHAKEVQGAKVTLTEDNYCAELTEVTDGLVLSATNYNALGAGERKQFLLAAANAITQRILQESIVEECVCNYANPFVGRSAC.

In terms of domain architecture, VWFD spans 952–1118; it reads LRGVVVNGQH…NSYRLASSCP (167 aa). A disulfide bond links C976 and C1117. N-linked (GlcNAc...) asparagine glycosylation is present at N988.

Hemolymph.

Its subcellular location is the secreted. Mediates transport for various types of lipids in hemolymph. Acts by forming lipoprotein particles that bind lipoproteins and lipids. Binds the A.niger cell wall component alpha-1,3-glucan, a fungal pathogen-associated molecular pattern (PAMP) that activates the host immune response. This chain is Apolipophorin, found in Galleria mellonella (Greater wax moth).